The following is a 205-amino-acid chain: MSSLRRIGKLGERSSVLFLCDMQEKFRKSIVFFPEIVSVAARMLQAAKKLEMPVIITEQHPKGLGPTVPELGADDLKKYTKTSFSMLTPEVEEELQSIPDLRSIVLCGIETQACIMSTALDLLDKGYDVHVVADACSSRSQVDRLFALSRMRQSGAFLTTSEGVLLQLLGDAKHPKFKEVQKIIMEPAPDSGLLSLFRGPNLFST.

It belongs to the isochorismatase family.

In Xenopus laevis (African clawed frog), this protein is Isochorismatase domain-containing protein 2 (isoc2).